The sequence spans 301 residues: MTFSQIILTLQKYWNEQGCIIVQPYDMPAGAGTYHWATFLRSLGKKPWKAAYVAPSRRPTDGRYGENPNRLGAYYQFQVILKPSPDNIQELYLKSLEILGLDIKNHDIRFVEDNWESPTLGAWGLGWEVWLDGMEITQFTYFQQVGGIPCELISGEITYGLERLAMYLQDIDNVYDIVWDDNGGHKVLYGDVHKQSEFEFSKYNFELADTKMLFTQFDNCFKECKRILEQKYIKDGVELDGLALPAYDYCMLAAHTFNVLDARGAISVTQRQDYILKIRELAKGCALAYSKNSAQISSKKR.

The protein belongs to the class-II aminoacyl-tRNA synthetase family. Tetramer of two alpha and two beta subunits.

Its subcellular location is the cytoplasm. The enzyme catalyses tRNA(Gly) + glycine + ATP = glycyl-tRNA(Gly) + AMP + diphosphate. The protein is Glycine--tRNA ligase alpha subunit of Campylobacter hominis (strain ATCC BAA-381 / DSM 21671 / CCUG 45161 / LMG 19568 / NCTC 13146 / CH001A).